Reading from the N-terminus, the 466-residue chain is Asparagine--tRNA ligase (466 aa).

The protein belongs to the class-II aminoacyl-tRNA synthetase family. As to quaternary structure, homodimer.

Its subcellular location is the cytoplasm. The enzyme catalyses tRNA(Asn) + L-asparagine + ATP = L-asparaginyl-tRNA(Asn) + AMP + diphosphate + H(+). This Wigglesworthia glossinidia brevipalpis protein is Asparagine--tRNA ligase.